A 320-amino-acid chain; its full sequence is Ferrochelatase (320 aa).

2 residues coordinate Fe cation: H194 and E275.

The protein belongs to the ferrochelatase family. As to quaternary structure, monomer.

Its subcellular location is the cytoplasm. It carries out the reaction heme b + 2 H(+) = protoporphyrin IX + Fe(2+). The protein operates within porphyrin-containing compound metabolism; protoheme biosynthesis; protoheme from protoporphyrin-IX: step 1/1. Functionally, catalyzes the ferrous insertion into protoporphyrin IX. The protein is Ferrochelatase of Shigella flexneri serotype 5b (strain 8401).